A 275-amino-acid chain; its full sequence is Ribosomal RNA small subunit methyltransferase A (275 aa).

S-adenosyl-L-methionine contacts are provided by N21, L23, G48, E69, D94, and N115.

It belongs to the class I-like SAM-binding methyltransferase superfamily. rRNA adenine N(6)-methyltransferase family. RsmA subfamily.

Its subcellular location is the cytoplasm. The catalysed reaction is adenosine(1518)/adenosine(1519) in 16S rRNA + 4 S-adenosyl-L-methionine = N(6)-dimethyladenosine(1518)/N(6)-dimethyladenosine(1519) in 16S rRNA + 4 S-adenosyl-L-homocysteine + 4 H(+). Functionally, specifically dimethylates two adjacent adenosines (A1518 and A1519) in the loop of a conserved hairpin near the 3'-end of 16S rRNA in the 30S particle. May play a critical role in biogenesis of 30S subunits. In Clostridium botulinum (strain ATCC 19397 / Type A), this protein is Ribosomal RNA small subunit methyltransferase A.